Reading from the N-terminus, the 416-residue chain is Serine hydroxymethyltransferase (416 aa).

(6S)-5,6,7,8-tetrahydrofolate is bound by residues Leu-121 and 125–127 (GHL). Position 230 is an N6-(pyridoxal phosphate)lysine (Lys-230). Position 355–357 (355–357 (SPF)) interacts with (6S)-5,6,7,8-tetrahydrofolate.

This sequence belongs to the SHMT family. As to quaternary structure, homodimer. The cofactor is pyridoxal 5'-phosphate.

The protein resides in the cytoplasm. The catalysed reaction is (6R)-5,10-methylene-5,6,7,8-tetrahydrofolate + glycine + H2O = (6S)-5,6,7,8-tetrahydrofolate + L-serine. It functions in the pathway one-carbon metabolism; tetrahydrofolate interconversion. It participates in amino-acid biosynthesis; glycine biosynthesis; glycine from L-serine: step 1/1. In terms of biological role, catalyzes the reversible interconversion of serine and glycine with tetrahydrofolate (THF) serving as the one-carbon carrier. This reaction serves as the major source of one-carbon groups required for the biosynthesis of purines, thymidylate, methionine, and other important biomolecules. Also exhibits THF-independent aldolase activity toward beta-hydroxyamino acids, producing glycine and aldehydes, via a retro-aldol mechanism. The sequence is that of Serine hydroxymethyltransferase from Streptococcus thermophilus (strain CNRZ 1066).